The sequence spans 297 residues: Coatomer subunit epsilon-2 (297 aa).

This sequence belongs to the COPE family. As to quaternary structure, oligomeric complex that consists of at least the alpha, beta, beta', gamma, delta, epsilon and zeta subunits.

It is found in the cytoplasm. The protein resides in the golgi apparatus membrane. The protein localises to the cytoplasmic vesicle. Its subcellular location is the COPI-coated vesicle membrane. Functionally, the coatomer is a cytosolic protein complex that binds to dilysine motifs and reversibly associates with Golgi non-clathrin-coated vesicles, which further mediate biosynthetic protein transport from the ER, via the Golgi up to the trans Golgi network. The coatomer complex is required for budding from Golgi membranes, and is essential for the retrograde Golgi-to-ER transport of dilysine-tagged proteins. The polypeptide is Coatomer subunit epsilon-2 (Oryza sativa subsp. japonica (Rice)).